The primary structure comprises 941 residues: Bifunctional glutamine synthetase adenylyltransferase/adenylyl-removing enzyme (941 aa).

Residues 1–437 form an adenylyl removase region; the sequence is MSIPTASLSP…TAEFAELLAP (437 aa). Residues 444–941 form an adenylyl transferase region; that stretch reads PDTLADYWRA…FPLGKDEAAL (498 aa).

This sequence belongs to the GlnE family. Mg(2+) is required as a cofactor.

The catalysed reaction is [glutamine synthetase]-O(4)-(5'-adenylyl)-L-tyrosine + phosphate = [glutamine synthetase]-L-tyrosine + ADP. It catalyses the reaction [glutamine synthetase]-L-tyrosine + ATP = [glutamine synthetase]-O(4)-(5'-adenylyl)-L-tyrosine + diphosphate. Its function is as follows. Involved in the regulation of glutamine synthetase GlnA, a key enzyme in the process to assimilate ammonia. When cellular nitrogen levels are high, the C-terminal adenylyl transferase (AT) inactivates GlnA by covalent transfer of an adenylyl group from ATP to specific tyrosine residue of GlnA, thus reducing its activity. Conversely, when nitrogen levels are low, the N-terminal adenylyl removase (AR) activates GlnA by removing the adenylyl group by phosphorolysis, increasing its activity. The regulatory region of GlnE binds the signal transduction protein PII (GlnB) which indicates the nitrogen status of the cell. The chain is Bifunctional glutamine synthetase adenylyltransferase/adenylyl-removing enzyme from Xanthomonas oryzae pv. oryzae (strain MAFF 311018).